We begin with the raw amino-acid sequence, 557 residues long: MDNLRPVLYLSMLLVLFLIWQAWNRDYGPQPVAAPGAQEQVMDRDGVPAPPQDVPDAPVSEAVDAPTEVAPAEPDRRRIRVVTDVLDIEIDTRGGDLVRADLPTYPVSLRTPDQPIRLLDERFRQYVAQSGLIHDRVPGVSGEGRAPSHHAIFQAERDEFRLADGQDELRVPLTWTSEDGVQVTKTYTFRRGDFLINVDHAVRNNSDQPWVGRQYRQIRHGSTPSRESWFLYTFTGVAYHDGRYEKLSLEDMAGKPLDKDVQGGWISIIQHYFLTAWVPFEHEINQFYTRVLGTPARPEHIIGMRSEAQTAAPGEETVFTSRFWVGPKEQAALKAIQPGLELTVDYGMLSFLAKPLFWVLDWIHNVVGNWGWAIIILTILIKLVFYKLSETSYRSMAKMRAVQPKMMQLKDRYGDDKQRMNQALMELYKKEKINPLGGCLPILVQIPVFIALYWVLLESVEMRQAPWILWIQDLSVRDPYFILPILMGVTMIAQYKLNPAPMDPIQQKLMMALPFVFTVFFAFFPAGLVLYWFVNNLLSIAQQWYITRNIEKAGKKG.

A helical transmembrane segment spans residues 3–23; the sequence is NLRPVLYLSMLLVLFLIWQAW. A disordered region spans residues 34–60; it reads APGAQEQVMDRDGVPAPPQDVPDAPVS. A run of 4 helical transmembrane segments spans residues 366-386, 436-456, 480-500, and 514-534; these read VVGN…LVFY, LGGC…YWVL, YFIL…LNPA, and PFVF…YWFV.

The protein belongs to the OXA1/ALB3/YidC family. Type 1 subfamily. In terms of assembly, interacts with the Sec translocase complex via SecD. Specifically interacts with transmembrane segments of nascent integral membrane proteins during membrane integration.

The protein localises to the cell inner membrane. Required for the insertion and/or proper folding and/or complex formation of integral membrane proteins into the membrane. Involved in integration of membrane proteins that insert both dependently and independently of the Sec translocase complex, as well as at least some lipoproteins. Aids folding of multispanning membrane proteins. This is Membrane protein insertase YidC from Thioalkalivibrio sulfidiphilus (strain HL-EbGR7).